Reading from the N-terminus, the 125-residue chain is Cu-Zn superoxide dismutase-like protein (125 aa).

An intrachain disulfide couples Cys-52 to Cys-102.

Belongs to the Cu-Zn superoxide dismutase family.

It is found in the host cytoplasm. In terms of biological role, virion protein with no enzymatic activity. This is Cu-Zn superoxide dismutase-like protein from Camelpox virus (strain M-96).